Here is a 597-residue protein sequence, read N- to C-terminus: Plasmepsin V (597 aa).

The Lumenal portion of the chain corresponds to 1–551 (MNNYFLRKEN…EKENIFLKVS (551 aa)). Residues 33–88 (CNNVENKIDNVGKKIENVGKKIGDMENKNDNVENKNDNVENKNDNVGNKNDNVKNA) are a coiled coil. The span at 58–75 (ENKNDNVENKNDNVENKN) shows a compositional bias: basic and acidic residues. Residues 58 to 83 (ENKNDNVENKNDNVENKNDNVGNKND) form a disordered region. The 415-residue stretch at 107–521 (YFLDIDIGKP…DLQQNQIAFI (415 aa)) folds into the Peptidase A1 domain. Residue D125 is part of the active site. 7 disulfide bridges follow: C135/C218, C138/C141, C162/C173, C167/C178, C266/C525, C396/C441, and C450/C486. Residues 289–298 (KEKQKMDKSD) show a composition bias toward basic and acidic residues. The segment at 289 to 323 (KEKQKMDKSDNNSSNKGNVSIKLKNNDKNDDEENN) is disordered. The span at 299 to 311 (NNSSNKGNVSIKL) shows a compositional bias: low complexity. The active site involves D372. The chain crosses the membrane as a helical span at residues 552–572 (YINLYCLWLLLALTILLSLIL). Residues 573–597 (YVRKMFYMDYFPLSDQNKSPIQEST) are Cytoplasmic-facing.

Belongs to the peptidase A1 family. Component of a complex composed of SPC25 and PMV; the interaction is mediated via the transmembrane domains. The complex interacts with the SEC61 channel-forming translocon complex and is involved in the recognition and import of PEXEL motif-containing proteins into the ER for subsequent export. Post-translationally, it is not clear if the zymogen has a cleavable propeptide. In vitro, appears to be cleaved between Asn-87 and Ala-88. Cleavage of the putative propeptide is dispensable for catalytic activity.

The protein resides in the endoplasmic reticulum membrane. Its function is as follows. During the asexual blood stage, plays an essential role in the export of several proteins into the host erythrocytes by cleaving the pentameric localization motif RxLxE/Q/D (termed Plasmodium export element (PEXEL)) located downstream of the N-terminal secretory signal sequence. Specifically, cleaves after the leucine residue in the RxLxE/Q/D (or RxLxxE) motif of exported proteins including RESA, EMP2, EMP3, KAHRP, RIF/Rifin and STEVOR. Also, by regulating protein export, plays an essential role in gametocyte development and thus parasite transmission to the mosquito vector. The chain is Plasmepsin V from Plasmodium falciparum (isolate HB3).